The primary structure comprises 138 residues: Ribosome-binding factor A (138 aa).

Belongs to the RbfA family. In terms of assembly, monomer. Binds 30S ribosomal subunits, but not 50S ribosomal subunits or 70S ribosomes.

It is found in the cytoplasm. Functionally, one of several proteins that assist in the late maturation steps of the functional core of the 30S ribosomal subunit. Associates with free 30S ribosomal subunits (but not with 30S subunits that are part of 70S ribosomes or polysomes). Required for efficient processing of 16S rRNA. May interact with the 5'-terminal helix region of 16S rRNA. This chain is Ribosome-binding factor A, found in Paracoccus denitrificans (strain Pd 1222).